Here is a 207-residue protein sequence, read N- to C-terminus: Large ribosomal subunit protein uL4 (207 aa).

A disordered region spans residues 44-77 (RRQGTHDTKTRSEVRGGGRKPWRQKGTGRARHGT). Basic and acidic residues predominate over residues 47–59 (GTHDTKTRSEVRG). The segment covering 60 to 77 (GGRKPWRQKGTGRARHGT) has biased composition (basic residues).

Belongs to the universal ribosomal protein uL4 family. In terms of assembly, part of the 50S ribosomal subunit.

Functionally, one of the primary rRNA binding proteins, this protein initially binds near the 5'-end of the 23S rRNA. It is important during the early stages of 50S assembly. It makes multiple contacts with different domains of the 23S rRNA in the assembled 50S subunit and ribosome. Its function is as follows. Forms part of the polypeptide exit tunnel. The protein is Large ribosomal subunit protein uL4 of Desulforudis audaxviator (strain MP104C).